The following is a 251-amino-acid chain: Triosephosphate isomerase (251 aa).

12–14 (NWK) is a substrate binding site. The Electrophile role is filled by histidine 98. Glutamate 168 serves as the catalytic Proton acceptor. Substrate is bound by residues glycine 174, serine 213, and 234 to 235 (GG).

Belongs to the triosephosphate isomerase family. Homodimer.

Its subcellular location is the cytoplasm. The enzyme catalyses D-glyceraldehyde 3-phosphate = dihydroxyacetone phosphate. Its pathway is carbohydrate biosynthesis; gluconeogenesis. The protein operates within carbohydrate degradation; glycolysis; D-glyceraldehyde 3-phosphate from glycerone phosphate: step 1/1. In terms of biological role, involved in the gluconeogenesis. Catalyzes stereospecifically the conversion of dihydroxyacetone phosphate (DHAP) to D-glyceraldehyde-3-phosphate (G3P). This chain is Triosephosphate isomerase, found in Bradyrhizobium diazoefficiens (strain JCM 10833 / BCRC 13528 / IAM 13628 / NBRC 14792 / USDA 110).